Here is a 202-residue protein sequence, read N- to C-terminus: Protein N-terminal glutamine amidohydrolase (202 aa).

Active-site residues include Cys27, His80, and Asp96.

It belongs to the NTAQ1 family. Monomer.

The protein localises to the cytoplasm. It localises to the cytosol. The protein resides in the nucleus. The catalysed reaction is N-terminal L-glutaminyl-[protein] + H2O = N-terminal L-glutamyl-[protein] + NH4(+). In terms of biological role, mediates the side-chain deamidation of N-terminal glutamine residues to glutamate, an important step in N-end rule pathway of protein degradation. Conversion of the resulting N-terminal glutamine to glutamate renders the protein susceptible to arginylation, polyubiquitination and degradation as specified by the N-end rule. Does not act on substrates with internal or C-terminal glutamine and does not act on non-glutamine residues in any position. Does not deaminate acetylated N-terminal glutamine. With the exception of proline, all tested second-position residues on substrate peptides do not greatly influence the activity. In contrast, a proline at position 2, virtually abolishes deamidation of N-terminal glutamine. This chain is Protein N-terminal glutamine amidohydrolase (ntaq1), found in Danio rerio (Zebrafish).